Reading from the N-terminus, the 1336-residue chain is Immunoglobulin superfamily member 1 (1336 aa).

An N-terminal signal peptide occupies residues 1-28; it reads MTLDRPGEGATMLKTFTVLLFCIRMSLG. Topologically, residues 29–518 are extracellular; sequence MTSIVMDPQP…GYLTWNYVLN (490 aa). Ig-like C2-type domains lie at 38 to 122, 137 to 222, 226 to 312, 321 to 408, and 419 to 500; these read PELW…KVLE, QAET…LVVA, PKPT…SDVL, PKTW…PSHN, and PKPS…HRSE. Asn-53 carries N-linked (GlcNAc...) asparagine glycosylation. The cysteines at positions 58 and 106 are disulfide-linked. Residues Cys-248 and Cys-296 are joined by a disulfide bond. Residues Asn-338, Asn-374, and Asn-381 are each glycosylated (N-linked (GlcNAc...) asparagine). Disulfide bonds link Cys-343-Cys-392 and Cys-441-Cys-484. A helical transmembrane segment spans residues 519–539; it reads EAIRLSLIMQLVALLLVVLWI. Residues 540 to 559 are Cytoplasmic-facing; sequence RWKCRRLRIREAWLLGTAQG. Residues 560 to 580 traverse the membrane as a helical segment; sequence VTMLFIVTALLCCGLCNGVLI. Residues 581-1336 are Extracellular-facing; the sequence is EETEIVMPTP…RISVELPVPI (756 aa). Ig-like C2-type domains lie at 589-677, 686-760, 777-869, 873-958, 965-1060, 1065-1150, and 1161-1242; these read TPKP…ALEL, PVIS…RPFK, PKPF…LVVT, PKPT…YLSM, TDTF…ELLV, PKPS…NHSD, and PKPS…EPSD. 8 N-linked (GlcNAc...) asparagine glycosylation sites follow: Asn-607, Asn-747, Asn-798, Asn-846, Asn-939, Asn-986, Asn-1027, and Asn-1082. Cys-703 and Cys-750 form a disulfide bridge. Cystine bridges form between Cys-799-Cys-849 and Cys-895-Cys-942. Cysteines 1087 and 1134 form a disulfide. Asn-1147 and Asn-1223 each carry an N-linked (GlcNAc...) asparagine glycan. Cys-1183 and Cys-1226 are joined by a disulfide. The disordered stretch occupies residues 1308–1336; sequence CNQEGEPGTPANSPSSTSQRISVELPVPI. Positions 1317-1328 are enriched in polar residues; that stretch reads PANSPSSTSQRI.

As to quaternary structure, interacts with INHA. In PubMed:12385827 does not interact with INHA; standard receptor binding assay. Interacts with ACVR1B; the interaction appears to be ligand-dependent as it is diminished by inhibin B and activin A. Interacts with ACVR2A, ACVR2B, ACVRL1 and BMPR1B. Interacts with HECTD1. In terms of tissue distribution, highly expressed in pancreas, testis and fetal liver. Moderately expressed in heart, prostate and small intestine. Expressed at very low levels in brain, thymus, ovary, colon, fetal lung and fetal kidney. Expressed in muscle. Isoform 3 is expressed in pituitary gland.

It localises to the membrane. Its subcellular location is the secreted. In terms of biological role, seems to be a coreceptor in inhibin signaling, but seems not to be a high-affinity inhibin receptor. Antagonizes activin A signaling in the presence or absence of inhibin B. Necessary to mediate a specific antagonistic effect of inhibin B on activin-stimulated transcription. This Homo sapiens (Human) protein is Immunoglobulin superfamily member 1 (IGSF1).